The chain runs to 127 residues: Major sperm protein 19/31/40/45/50/51/53/59/61/65/81/113/142 (127 aa).

An N-acetylalanine modification is found at Ala-2. The MSP domain maps to 9–126 (DIQTQPGTKI…RRKNLPIEYN (118 aa)).

As to quaternary structure, helical subfilaments are built from MSP dimers; filaments are formed from two subfilaments coiling round one another; and filaments themselves supercoil to produce bundles. As to expression, sperm.

The protein resides in the cell projection. The protein localises to the pseudopodium. It localises to the cytoplasm. Its subcellular location is the cytoskeleton. Its function is as follows. Central component in molecular interactions underlying sperm crawling. Forms an extensive filament system that extends from sperm villipoda, along the leading edge of the pseudopod. The chain is Major sperm protein 19/31/40/45/50/51/53/59/61/65/81/113/142 (msp-19) from Caenorhabditis elegans.